Here is a 1141-residue protein sequence, read N- to C-terminus: Isoleucine--tRNA ligase (1141 aa).

Positions 50 to 60 match the 'HIGH' region motif; the sequence is PSANGMPGIHH. The short motif at 689 to 693 is the 'KMSKS' region element; that stretch reads KMSKR. Residue Lys692 coordinates ATP.

It belongs to the class-I aminoacyl-tRNA synthetase family. IleS type 2 subfamily. Monomer. Zn(2+) is required as a cofactor.

It localises to the cytoplasm. It catalyses the reaction tRNA(Ile) + L-isoleucine + ATP = L-isoleucyl-tRNA(Ile) + AMP + diphosphate. Its function is as follows. Catalyzes the attachment of isoleucine to tRNA(Ile). As IleRS can inadvertently accommodate and process structurally similar amino acids such as valine, to avoid such errors it has two additional distinct tRNA(Ile)-dependent editing activities. One activity is designated as 'pretransfer' editing and involves the hydrolysis of activated Val-AMP. The other activity is designated 'posttransfer' editing and involves deacylation of mischarged Val-tRNA(Ile). The polypeptide is Isoleucine--tRNA ligase (Bacteroides fragilis (strain ATCC 25285 / DSM 2151 / CCUG 4856 / JCM 11019 / LMG 10263 / NCTC 9343 / Onslow / VPI 2553 / EN-2)).